A 199-amino-acid chain; its full sequence is Recombination protein RecR (199 aa).

Residues Cys-57 to Cys-72 form a C4-type zinc finger. The Toprim domain occupies Glu-81–Pro-176.

The protein belongs to the RecR family.

In terms of biological role, may play a role in DNA repair. It seems to be involved in an RecBC-independent recombinational process of DNA repair. It may act with RecF and RecO. The chain is Recombination protein RecR from Shewanella sediminis (strain HAW-EB3).